The chain runs to 125 residues: UPF0231 protein HD_1708 (125 aa).

This sequence belongs to the UPF0231 family.

In Haemophilus ducreyi (strain 35000HP / ATCC 700724), this protein is UPF0231 protein HD_1708.